The chain runs to 513 residues: Na(+)/H(+) antiporter NhaB (513 aa).

The next 12 membrane-spanning stretches (helical) occupy residues 23–43 (LALI…PFVA), 52–72 (IFTL…LLAI), 97–117 (LLLM…LFIF), 120–140 (LLLS…AAAF), 144–164 (FLDA…FYGI), 202–222 (LMMH…VGEP), 238–258 (FFLR…LTCL), 303–323 (AIIG…VGLI), 348–368 (TESL…AVII), 391–411 (LFYI…VGTI), 447–467 (ATPN…APLI), and 475–495 (VWMA…CVEF).

Belongs to the NhaB Na(+)/H(+) (TC 2.A.34) antiporter family.

It is found in the cell inner membrane. It carries out the reaction 2 Na(+)(in) + 3 H(+)(out) = 2 Na(+)(out) + 3 H(+)(in). Its function is as follows. Na(+)/H(+) antiporter that extrudes sodium in exchange for external protons. The protein is Na(+)/H(+) antiporter NhaB of Shigella sonnei (strain Ss046).